Here is a 156-residue protein sequence, read N- to C-terminus: MNVIKGVVAAPNARVAIAIARFNNFINDSLLEGAVDALERIGQVSSENITVVWVPGAYELPLTVKALVESDKYDAVIALGTVIRGGTAHFEYVAGECSSGLSHVAMQSEIPVTFGVLTTESIEQAIERAGTKAGNKGAEAAMTALEMINVLKAIKG.

5-amino-6-(D-ribitylamino)uracil is bound by residues Phe22, 57–59 (AYE), and 81–83 (TVI). 86–87 (GT) contacts (2S)-2-hydroxy-3-oxobutyl phosphate. His89 acts as the Proton donor in catalysis. Residue Phe114 participates in 5-amino-6-(D-ribitylamino)uracil binding. Arg128 is a binding site for (2S)-2-hydroxy-3-oxobutyl phosphate.

The protein belongs to the DMRL synthase family. In terms of assembly, forms an icosahedral capsid composed of 60 subunits, arranged as a dodecamer of pentamers.

It catalyses the reaction (2S)-2-hydroxy-3-oxobutyl phosphate + 5-amino-6-(D-ribitylamino)uracil = 6,7-dimethyl-8-(1-D-ribityl)lumazine + phosphate + 2 H2O + H(+). It functions in the pathway cofactor biosynthesis; riboflavin biosynthesis; riboflavin from 2-hydroxy-3-oxobutyl phosphate and 5-amino-6-(D-ribitylamino)uracil: step 1/2. Catalyzes the formation of 6,7-dimethyl-8-ribityllumazine by condensation of 5-amino-6-(D-ribitylamino)uracil with 3,4-dihydroxy-2-butanone 4-phosphate. This is the penultimate step in the biosynthesis of riboflavin. The chain is 6,7-dimethyl-8-ribityllumazine synthase from Proteus mirabilis (strain HI4320).